A 381-amino-acid polypeptide reads, in one-letter code: Succinyl-diaminopimelate desuccinylase (381 aa).

His-71 provides a ligand contact to Zn(2+). The active site involves Asp-73. A Zn(2+)-binding site is contributed by Asp-104. Glu-138 functions as the Proton acceptor in the catalytic mechanism. Residues Glu-139, Glu-167, and His-353 each coordinate Zn(2+).

This sequence belongs to the peptidase M20A family. DapE subfamily. Homodimer. Requires Zn(2+) as cofactor. It depends on Co(2+) as a cofactor.

It catalyses the reaction N-succinyl-(2S,6S)-2,6-diaminopimelate + H2O = (2S,6S)-2,6-diaminopimelate + succinate. It participates in amino-acid biosynthesis; L-lysine biosynthesis via DAP pathway; LL-2,6-diaminopimelate from (S)-tetrahydrodipicolinate (succinylase route): step 3/3. Catalyzes the hydrolysis of N-succinyl-L,L-diaminopimelic acid (SDAP), forming succinate and LL-2,6-diaminopimelate (DAP), an intermediate involved in the bacterial biosynthesis of lysine and meso-diaminopimelic acid, an essential component of bacterial cell walls. This is Succinyl-diaminopimelate desuccinylase from Shewanella piezotolerans (strain WP3 / JCM 13877).